A 282-amino-acid polypeptide reads, in one-letter code: MYQRLAFALVFLIIAGFVSFQVIFTVPEQPQIITQTGTNITQDIRCMEFKQPQVLDKDGELNVLVWNIYKQNRDNWQQALDAFSANKQLLLLQEASLTDEFKNWLVDGHWVSNQVSAFKALGSGAGVISIAQKEPIRACAYTSKEPWLRLPKSALYSKYQLSNGETLAVVNIHAINFTVGTEEYTSQLSVLEKVLKEHKGPILFAGDFNSWSEERLTAMKKALQKANLQEVTFSQDNRTQFITGLPLDHVFYRGLTLKNAKAPQSDASDHNPLLVSFTLNDQ.

Belongs to the UPF0294 family.

It is found in the cytoplasm. This is UPF0294 protein VIBHAR_03217 from Vibrio campbellii (strain ATCC BAA-1116).